The following is a 432-amino-acid chain: 5'-deoxyadenosine deaminase (432 aa).

His-63 and His-65 together coordinate Zn(2+). 2 residues coordinate substrate: Glu-92 and His-184. His-211 contacts Zn(2+). Residues Glu-214 and Asp-299 each contribute to the substrate site. Asp-299 lines the Zn(2+) pocket.

This sequence belongs to the metallo-dependent hydrolases superfamily. MTA/SAH deaminase family. Homotetramer. Zn(2+) is required as a cofactor.

The catalysed reaction is 5'-deoxyadenosine + H2O + H(+) = 5'-deoxyinosine + NH4(+). It catalyses the reaction S-adenosyl-L-homocysteine + H2O + H(+) = S-inosyl-L-homocysteine + NH4(+). It carries out the reaction S-methyl-5'-thioadenosine + H2O + H(+) = S-methyl-5'-thioinosine + NH4(+). The enzyme catalyses adenosine + H2O + H(+) = inosine + NH4(+). Its pathway is amino-acid biosynthesis; S-adenosyl-L-methionine biosynthesis. Catalyzes the deamination of three SAM-derived enzymatic products, namely 5'-deoxyadenosine, S-adenosyl-L-homocysteine, and 5'-methylthioadenosine, to produce the inosine analogs. Can also deaminate adenosine. The preferred substrate for this enzyme is 5'-deoxyadenosine, but all these substrates are efficiently deaminated. Likely functions in a S-adenosyl-L-methionine (SAM) recycling pathway from S-adenosyl-L-homocysteine (SAH) produced from SAM-dependent methylation reactions. May also be involved in the recycling of 5'-deoxyadenosine, whereupon the 5'-deoxyribose moiety of 5'-deoxyinosine is further metabolized to deoxyhexoses used for the biosynthesis of aromatic amino acids in methanogens. The polypeptide is 5'-deoxyadenosine deaminase (Methanosarcina acetivorans (strain ATCC 35395 / DSM 2834 / JCM 12185 / C2A)).